The primary structure comprises 324 residues: Fructose-1,6-bisphosphatase class 1 (324 aa).

E88, D107, L109, and D110 together coordinate Mg(2+). Residues 110–113 (DGSS), N199, and K265 each bind substrate. Mg(2+) is bound at residue E271.

Belongs to the FBPase class 1 family. In terms of assembly, homotetramer. Requires Mg(2+) as cofactor.

The protein localises to the cytoplasm. It carries out the reaction beta-D-fructose 1,6-bisphosphate + H2O = beta-D-fructose 6-phosphate + phosphate. The protein operates within carbohydrate biosynthesis; gluconeogenesis. This is Fructose-1,6-bisphosphatase class 1 from Neisseria gonorrhoeae (strain ATCC 700825 / FA 1090).